Here is a 527-residue protein sequence, read N- to C-terminus: Type 2 DNA topoisomerase 6 subunit B (527 aa).

ATP-binding positions include N39, D73, 94–95 (SK), 103–110 (GVFGLGLK), and K421.

The protein belongs to the TOP6B family. As to quaternary structure, homodimer. Heterotetramer of two Top6A and two Top6B chains.

The enzyme catalyses ATP-dependent breakage, passage and rejoining of double-stranded DNA.. In terms of biological role, relaxes both positive and negative superturns and exhibits a strong decatenase activity. The chain is Type 2 DNA topoisomerase 6 subunit B from Pyrobaculum aerophilum (strain ATCC 51768 / DSM 7523 / JCM 9630 / CIP 104966 / NBRC 100827 / IM2).